Reading from the N-terminus, the 1229-residue chain is DNA-directed RNA polymerase subunit beta (1229 aa).

The protein belongs to the RNA polymerase beta chain family. As to quaternary structure, the RNAP catalytic core consists of 2 alpha, 1 beta, 1 beta' and 1 omega subunit. When a sigma factor is associated with the core the holoenzyme is formed, which can initiate transcription.

The catalysed reaction is RNA(n) + a ribonucleoside 5'-triphosphate = RNA(n+1) + diphosphate. DNA-dependent RNA polymerase catalyzes the transcription of DNA into RNA using the four ribonucleoside triphosphates as substrates. The sequence is that of DNA-directed RNA polymerase subunit beta from Roseiflexus sp. (strain RS-1).